The primary structure comprises 449 residues: Major capsid protein (449 aa).

Positions 349–427 (AVTQVIVSPA…TVDIGTADEP (79 aa)) constitute a BIG2 domain.

It belongs to the phi29likevirus major capsid protein family. As to quaternary structure, homohexamer. Homopentamer. The prolate capsid is composed of pentamers and hexamers of the capsid protein.

Its subcellular location is the virion. Assembles to form a prolate capsid shell of about 54 nm in length and 45 nm in width, with a T=3, Q=5 symmetry. The protein is Major capsid protein (8) of Bacillus subtilis (Bacteriophage B103).